The sequence spans 115 residues: MARVKRGNIARKRRNKILNLAKGFRGGNKNLFRTANQRVMKALCNAYRDRRRRKRDFRRLWISRINASARINGTNYSKLINGMKNADIIINRKMLAQLAITDPKCFEKIVSSVSQ.

This sequence belongs to the bacterial ribosomal protein bL20 family.

Binds directly to 23S ribosomal RNA and is necessary for the in vitro assembly process of the 50S ribosomal subunit. It is not involved in the protein synthesizing functions of that subunit. In Prochlorococcus marinus (strain AS9601), this protein is Large ribosomal subunit protein bL20.